We begin with the raw amino-acid sequence, 82 residues long: Large ribosomal subunit protein bL31B (82 aa).

The protein belongs to the bacterial ribosomal protein bL31 family. Type B subfamily. In terms of assembly, part of the 50S ribosomal subunit after the end of exponential growth.

Functionally, while neither of the L31 paralogs is essential, this protein does not seem to function as the main L31 protein. Has a higher affinity for 70S ribosomes than the zinc-containing L31 paralog; is able to displace it to varying extents, even under zinc-replete conditions. This is Large ribosomal subunit protein bL31B (rpmE2) from Bacillus subtilis (strain 168).